A 209-amino-acid chain; its full sequence is Putative amino acid efflux protein YcgF (209 aa).

Helical transmembrane passes span 1–21 (MNIF…VGPV), 39–59 (IFGL…YFGL), 62–82 (FLTA…VLTY), 110–130 (FASG…WLGI), 147–167 (LLIY…CMAI), and 184–204 (LTGI…YQGI).

This sequence belongs to the Rht family.

Its subcellular location is the cell membrane. The protein is Putative amino acid efflux protein YcgF (ycgF) of Bacillus subtilis (strain 168).